Consider the following 246-residue polypeptide: Outer membrane protein assembly factor BamD (246 aa).

The N-terminal stretch at 1–22 is a signal peptide; it reads MKKKNSIIFVFMILFFNSTVQS.

The protein belongs to the BamD family. In terms of assembly, part of the Bam complex.

Its subcellular location is the cell outer membrane. Part of the outer membrane protein assembly complex, which is involved in assembly and insertion of beta-barrel proteins into the outer membrane. This chain is Outer membrane protein assembly factor BamD, found in Buchnera aphidicola subsp. Acyrthosiphon pisum (strain APS) (Acyrthosiphon pisum symbiotic bacterium).